Here is a 357-residue protein sequence, read N- to C-terminus: S-adenosylmethionine:tRNA ribosyltransferase-isomerase (357 aa).

This sequence belongs to the QueA family. Monomer.

It is found in the cytoplasm. It carries out the reaction 7-aminomethyl-7-carbaguanosine(34) in tRNA + S-adenosyl-L-methionine = epoxyqueuosine(34) in tRNA + adenine + L-methionine + 2 H(+). The protein operates within tRNA modification; tRNA-queuosine biosynthesis. In terms of biological role, transfers and isomerizes the ribose moiety from AdoMet to the 7-aminomethyl group of 7-deazaguanine (preQ1-tRNA) to give epoxyqueuosine (oQ-tRNA). The protein is S-adenosylmethionine:tRNA ribosyltransferase-isomerase of Proteus mirabilis (strain HI4320).